Reading from the N-terminus, the 378-residue chain is Chorismate synthase (378 aa).

Residues 37 to 60 (EEEIQKDLTRRRPGQNDLTTPRDE) are disordered. Arg47 contacts NADP(+). FMN contacts are provided by residues 124-126 (RSS), Gly289, 304-308 (KPTST), and Arg330.

The protein belongs to the chorismate synthase family. As to quaternary structure, homotetramer. The cofactor is FMNH2.

The enzyme catalyses 5-O-(1-carboxyvinyl)-3-phosphoshikimate = chorismate + phosphate. It participates in metabolic intermediate biosynthesis; chorismate biosynthesis; chorismate from D-erythrose 4-phosphate and phosphoenolpyruvate: step 7/7. In terms of biological role, catalyzes the anti-1,4-elimination of the C-3 phosphate and the C-6 proR hydrogen from 5-enolpyruvylshikimate-3-phosphate (EPSP) to yield chorismate, which is the branch point compound that serves as the starting substrate for the three terminal pathways of aromatic amino acid biosynthesis. This reaction introduces a second double bond into the aromatic ring system. This chain is Chorismate synthase, found in Leptospira biflexa serovar Patoc (strain Patoc 1 / Ames).